Reading from the N-terminus, the 621-residue chain is Chaperone protein HtpG (621 aa).

The tract at residues 1 to 328 is a; substrate-binding; the sequence is MTQEKKKFDA…SEDLPLNISR (328 aa). The tract at residues 329–544 is b; the sequence is ESLQHNNVLE…DTAMDIRMER (216 aa). A c region spans residues 545 to 621; sequence FLIEQKQIAN…LNDILQKAIL (77 aa).

The protein belongs to the heat shock protein 90 family. In terms of assembly, homodimer.

Its subcellular location is the cytoplasm. Functionally, molecular chaperone. Has ATPase activity. The chain is Chaperone protein HtpG from Rickettsia prowazekii (strain Madrid E).